Reading from the N-terminus, the 45-residue chain is uncharacterized protein (45 aa).

This is an uncharacterized protein from Dictyostelium discoideum (Social amoeba).